The chain runs to 149 residues: Transcription antitermination protein NusB (149 aa).

This sequence belongs to the NusB family.

Involved in transcription antitermination. Required for transcription of ribosomal RNA (rRNA) genes. Binds specifically to the boxA antiterminator sequence of the ribosomal RNA (rrn) operons. The chain is Transcription antitermination protein NusB from Acinetobacter baumannii (strain SDF).